A 656-amino-acid polypeptide reads, in one-letter code: Bifunctional protein ThiO/ThiG (656 aa).

The segment at 1-395 is thiO; sequence MQTTSDVLII…HAAENSEGSK (395 aa). FAD is bound by residues 7 to 21 and 48 to 50; these read VLIIGGGIIGLAIAV and AGM. Glycine is bound at residue Glu56. FAD is bound at residue Val169. The glycine site is built by Arg298 and Arg324. An FAD-binding site is contributed by 322–328; sequence HYRNGIL. The segment at 396–656 is thiG; that stretch reads DLLEIAGRKF…ASSPLTGLVG (261 aa). The active-site Schiff-base intermediate with DXP is the Lys498. 1-deoxy-D-xylulose 5-phosphate is bound by residues Gly559, 585-586, and 607-608; these read AG and NS.

In the N-terminal section; belongs to the DAO family. ThiO subfamily. It in the C-terminal section; belongs to the ThiG family. Interacts with ThiH and ThiS. FAD serves as cofactor.

The protein resides in the cytoplasm. It carries out the reaction glycine + O2 + H2O = glyoxylate + H2O2 + NH4(+). The catalysed reaction is [ThiS sulfur-carrier protein]-C-terminal-Gly-aminoethanethioate + 2-iminoacetate + 1-deoxy-D-xylulose 5-phosphate = [ThiS sulfur-carrier protein]-C-terminal Gly-Gly + 2-[(2R,5Z)-2-carboxy-4-methylthiazol-5(2H)-ylidene]ethyl phosphate + 2 H2O + H(+). It participates in cofactor biosynthesis; thiamine diphosphate biosynthesis. Functionally, catalyzes the FAD-dependent oxidative deamination of glycine. Is essential for thiamine biosynthesis since the oxidation of glycine catalyzed by ThiO generates the glycine imine intermediate (dehydroglycine) required for the biosynthesis of the thiazole ring of thiamine pyrophosphate. In terms of biological role, catalyzes the rearrangement of 1-deoxy-D-xylulose 5-phosphate (DXP) to produce the thiazole phosphate moiety of thiamine. Sulfur is provided by the thiocarboxylate moiety of the carrier protein ThiS. In vitro, sulfur can be provided by H(2)S. The chain is Bifunctional protein ThiO/ThiG (thiO/thiG) from Synechocystis sp. (strain ATCC 27184 / PCC 6803 / Kazusa).